We begin with the raw amino-acid sequence, 198 residues long: Putative mycofactocin biosynthesis transcriptional regulator MftR (198 aa).

In terms of domain architecture, HTH tetR-type spans 12–72 (STTPHHISDV…GDFSTHLAQL (61 aa)). Positions 35–54 (SVDDIARAAGIARRTLFRYY) form a DNA-binding region, H-T-H motif.

In terms of biological role, may regulate a gene cluster involved in mycofactocin expression. Mycofactocin is a conserved polypeptide that might serve as an electron carrier. This Mycobacterium tuberculosis (strain ATCC 25618 / H37Rv) protein is Putative mycofactocin biosynthesis transcriptional regulator MftR (mftR).